Reading from the N-terminus, the 132-residue chain is Myelin P2 protein (132 aa).

Ser2 carries the post-translational modification N-acetylserine. (9Z)-octadecenoate is bound by residues Arg107 and 127–129 (RIY). Residues Arg107 and 127-129 (RIY) each bind hexadecanoate.

It belongs to the calycin superfamily. Fatty-acid binding protein (FABP) family. In terms of assembly, monomer.

The protein localises to the cytoplasm. May play a role in lipid transport protein in Schwann cells. May bind cholesterol. In Oryctolagus cuniculus (Rabbit), this protein is Myelin P2 protein (PMP2).